Here is an 81-residue protein sequence, read N- to C-terminus: Costars family protein ABRACL (81 aa).

An N-acetylmethionine modification is found at methionine 1.

The protein belongs to the costars family.

In Homo sapiens (Human), this protein is Costars family protein ABRACL (ABRACL).